The following is a 145-amino-acid chain: uncharacterized protein (145 aa).

A helical transmembrane segment spans residues 63–83 (FLCLPLFLSFLVANLILWLSF).

Its subcellular location is the mitochondrion membrane. This is an uncharacterized protein from Arabidopsis thaliana (Mouse-ear cress).